Here is a 643-residue protein sequence, read N- to C-terminus: Threonine--tRNA ligase (643 aa).

The 62-residue stretch at 1–62 (MSFSVTLPDG…DEDVEAAIIT (62 aa)) folds into the TGS domain. The segment at 239-537 (DHRTIGRDLD…LTEIYKGAFP (299 aa)) is catalytic. 3 residues coordinate Zn(2+): cysteine 333, histidine 384, and histidine 514.

Belongs to the class-II aminoacyl-tRNA synthetase family. As to quaternary structure, homodimer. Requires Zn(2+) as cofactor.

It localises to the cytoplasm. It catalyses the reaction tRNA(Thr) + L-threonine + ATP = L-threonyl-tRNA(Thr) + AMP + diphosphate + H(+). Catalyzes the attachment of threonine to tRNA(Thr) in a two-step reaction: L-threonine is first activated by ATP to form Thr-AMP and then transferred to the acceptor end of tRNA(Thr). Also edits incorrectly charged L-seryl-tRNA(Thr). The protein is Threonine--tRNA ligase of Lactobacillus gasseri (strain ATCC 33323 / DSM 20243 / BCRC 14619 / CIP 102991 / JCM 1131 / KCTC 3163 / NCIMB 11718 / NCTC 13722 / AM63).